A 204-amino-acid polypeptide reads, in one-letter code: Holliday junction branch migration complex subunit RuvA (204 aa).

The domain I stretch occupies residues 1–64 (MIGRLQGILL…EDAHLLFGFA (64 aa)). Residues 65–143 (QKTDRTLFRE…GVKQSDFFVE (79 aa)) form a domain II region. The segment at 144-155 (STHIPLSPSIES) is flexible linker. A domain III region spans residues 156–204 (HSESSSDEAISALIALGYKPAEAEKMVKRVAKPELTSEQVIREALKAAL).

Belongs to the RuvA family. As to quaternary structure, homotetramer. Forms an RuvA(8)-RuvB(12)-Holliday junction (HJ) complex. HJ DNA is sandwiched between 2 RuvA tetramers; dsDNA enters through RuvA and exits via RuvB. An RuvB hexamer assembles on each DNA strand where it exits the tetramer. Each RuvB hexamer is contacted by two RuvA subunits (via domain III) on 2 adjacent RuvB subunits; this complex drives branch migration. In the full resolvosome a probable DNA-RuvA(4)-RuvB(12)-RuvC(2) complex forms which resolves the HJ.

The protein localises to the cytoplasm. Its function is as follows. The RuvA-RuvB-RuvC complex processes Holliday junction (HJ) DNA during genetic recombination and DNA repair, while the RuvA-RuvB complex plays an important role in the rescue of blocked DNA replication forks via replication fork reversal (RFR). RuvA specifically binds to HJ cruciform DNA, conferring on it an open structure. The RuvB hexamer acts as an ATP-dependent pump, pulling dsDNA into and through the RuvAB complex. HJ branch migration allows RuvC to scan DNA until it finds its consensus sequence, where it cleaves and resolves the cruciform DNA. The protein is Holliday junction branch migration complex subunit RuvA of Haemophilus influenzae (strain PittGG).